Consider the following 353-residue polypeptide: UDP-3-O-acylglucosamine N-acyltransferase (353 aa).

The Proton acceptor role is filled by His258.

It belongs to the transferase hexapeptide repeat family. LpxD subfamily. As to quaternary structure, homotrimer.

It catalyses the reaction a UDP-3-O-[(3R)-3-hydroxyacyl]-alpha-D-glucosamine + a (3R)-hydroxyacyl-[ACP] = a UDP-2-N,3-O-bis[(3R)-3-hydroxyacyl]-alpha-D-glucosamine + holo-[ACP] + H(+). It functions in the pathway bacterial outer membrane biogenesis; LPS lipid A biosynthesis. Functionally, catalyzes the N-acylation of UDP-3-O-acylglucosamine using 3-hydroxyacyl-ACP as the acyl donor. Is involved in the biosynthesis of lipid A, a phosphorylated glycolipid that anchors the lipopolysaccharide to the outer membrane of the cell. This is UDP-3-O-acylglucosamine N-acyltransferase from Parvibaculum lavamentivorans (strain DS-1 / DSM 13023 / NCIMB 13966).